Reading from the N-terminus, the 375-residue chain is 23S rRNA (uracil(747)-C(5))-methyltransferase RlmC (375 aa).

Residues C3, C11, C14, and C87 each coordinate [4Fe-4S] cluster. S-adenosyl-L-methionine-binding residues include Q212, F241, E262, and N307. Residue C334 is the Nucleophile of the active site.

Belongs to the class I-like SAM-binding methyltransferase superfamily. RNA M5U methyltransferase family. RlmC subfamily.

The enzyme catalyses uridine(747) in 23S rRNA + S-adenosyl-L-methionine = 5-methyluridine(747) in 23S rRNA + S-adenosyl-L-homocysteine + H(+). Its function is as follows. Catalyzes the formation of 5-methyl-uridine at position 747 (m5U747) in 23S rRNA. The polypeptide is 23S rRNA (uracil(747)-C(5))-methyltransferase RlmC (Shigella flexneri serotype 5b (strain 8401)).